The chain runs to 699 residues: UvrABC system protein B (699 aa).

The 154-residue stretch at 35 to 188 (ERINNGEKDV…DHLLRKFVSM (154 aa)) folds into the Helicase ATP-binding domain. 48-55 (GATGTGKS) is an ATP binding site. Positions 101–124 (YYDYYQPEAYVAQTDTFIEKDSSI) match the Beta-hairpin motif. A Helicase C-terminal domain is found at 438–604 (QIDDLLGEIR…PLRKKIADIT (167 aa)). The UVR domain occupies 654 to 689 (VGLIEQLTEQMHGAAAELQFEVAARIRDEVKELKRE).

Belongs to the UvrB family. Forms a heterotetramer with UvrA during the search for lesions. Interacts with UvrC in an incision complex.

It is found in the cytoplasm. Its function is as follows. The UvrABC repair system catalyzes the recognition and processing of DNA lesions. A damage recognition complex composed of 2 UvrA and 2 UvrB subunits scans DNA for abnormalities. Upon binding of the UvrA(2)B(2) complex to a putative damaged site, the DNA wraps around one UvrB monomer. DNA wrap is dependent on ATP binding by UvrB and probably causes local melting of the DNA helix, facilitating insertion of UvrB beta-hairpin between the DNA strands. Then UvrB probes one DNA strand for the presence of a lesion. If a lesion is found the UvrA subunits dissociate and the UvrB-DNA preincision complex is formed. This complex is subsequently bound by UvrC and the second UvrB is released. If no lesion is found, the DNA wraps around the other UvrB subunit that will check the other stand for damage. This is UvrABC system protein B from Paenarthrobacter aurescens (strain TC1).